The primary structure comprises 270 residues: 5'-AMP-activated protein kinase subunit beta-1 (270 aa).

A disordered region spans residues 1 to 46 (MGNTSSERAALERHGGHKTPRRDSSGGTKDGDRPKILMDSPEDADL). G2 carries N-myristoyl glycine lipidation. T4 is subject to Phosphothreonine. Residues S5 and S6 each carry the phosphoserine modification. T19 is modified (phosphothreonine). A compositionally biased stretch (basic and acidic residues) spans 21–36 (RRDSSGGTKDGDRPKI). A phosphoserine; by autocatalysis mark is found at S24 and S25. 3 positions are modified to phosphoserine: S40, S96, and S101. The segment at 68–163 (EVNDKAPAQA…QVKKTDFEVF (96 aa)) is glycogen-binding domain. Residue S108 is modified to Phosphoserine; by autocatalysis. Position 148 is a phosphothreonine (T148). S182 bears the Phosphoserine mark.

It belongs to the 5'-AMP-activated protein kinase beta subunit family. As to quaternary structure, AMPK is a heterotrimer of an alpha catalytic subunit (PRKAA1 or PRKAA2), a beta (PRKAB1 or PRKAB2) and a gamma non-catalytic subunits (PRKAG1, PRKAG2 or PRKAG3). Interacts with FNIP1 and FNIP2. Post-translationally, phosphorylated when associated with the catalytic subunit (PRKAA1 or PRKAA2). Phosphorylated by ULK1; leading to negatively regulate AMPK activity and suggesting the existence of a regulatory feedback loop between ULK1 and AMPK.

Non-catalytic subunit of AMP-activated protein kinase (AMPK), an energy sensor protein kinase that plays a key role in regulating cellular energy metabolism. In response to reduction of intracellular ATP levels, AMPK activates energy-producing pathways and inhibits energy-consuming processes: inhibits protein, carbohydrate and lipid biosynthesis, as well as cell growth and proliferation. AMPK acts via direct phosphorylation of metabolic enzymes, and by longer-term effects via phosphorylation of transcription regulators. Also acts as a regulator of cellular polarity by remodeling the actin cytoskeleton; probably by indirectly activating myosin. Beta non-catalytic subunit acts as a scaffold on which the AMPK complex assembles, via its C-terminus that bridges alpha (PRKAA1 or PRKAA2) and gamma subunits (PRKAG1, PRKAG2 or PRKAG3). The polypeptide is 5'-AMP-activated protein kinase subunit beta-1 (PRKAB1) (Pongo abelii (Sumatran orangutan)).